A 210-amino-acid chain; its full sequence is Putative tyrosine-protein phosphatase OCA1 (210 aa).

In terms of domain architecture, Tyrosine-protein phosphatase spans 44–204 (NFCPVERYLY…EIDREKAPNW (161 aa)). Cys140 acts as the Phosphocysteine intermediate in catalysis.

The protein belongs to the protein-tyrosine phosphatase family.

Its subcellular location is the cytoplasm. The enzyme catalyses O-phospho-L-tyrosyl-[protein] + H2O = L-tyrosyl-[protein] + phosphate. Functionally, putative tyrosine-protein phosphatase required for protection against superoxide stress. The protein is Putative tyrosine-protein phosphatase OCA1 (OCA1) of Kluyveromyces lactis (strain ATCC 8585 / CBS 2359 / DSM 70799 / NBRC 1267 / NRRL Y-1140 / WM37) (Yeast).